The following is a 793-amino-acid chain: Serine/threonine-protein phosphatase BSU1 (793 aa).

Kelch repeat units lie at residues 53–109, 110–160, 214–262, 264–314, and 329–388; these read STTA…LYGT, LILI…IAAQ, IFLL…VFGG, KLHV…NQYQ, and HLYV…EASS. Phosphoserine is present on residues Ser-395 and Ser-444. Positions 510, 512, 544, and 576 each coordinate Mn(2+). His-577 (proton donor) is an active-site residue. Mn(2+)-binding residues include His-629 and His-707. The residue at position 764 (Ser-764) is a Phosphoserine.

This sequence belongs to the PPP phosphatase family. BSU subfamily. In terms of assembly, interacts with CDG1, CDL1 and ASK7/BIN2. Mn(2+) serves as cofactor. Post-translationally, phosphorylated at Ser-395 and Ser-444. Phosphorylated at Ser-764 by CDG1 and CDL1. In terms of tissue distribution, mainly expressed in young, elongating tissues. In young seedlings, it is expressed at the base of the hypocotyl, at the tip and most peripheral cell layers of cotyledons, and in the vascular cylinder of roots, particularly in the elongation zone and at the point of emergence of lateral roots. In mature plants, it is still present in the root vasculature, but almost completely absent in fully expanded stems and leaves. In flowers, it is mainly expressed in sepal veins, anther filaments, and in the style, suggesting that BSU1 is expressed in actively growing regions and apparently enriched in vascular tissues.

The protein resides in the nucleus. The catalysed reaction is O-phospho-L-seryl-[protein] + H2O = L-seryl-[protein] + phosphate. The enzyme catalyses O-phospho-L-threonyl-[protein] + H2O = L-threonyl-[protein] + phosphate. With respect to regulation, activated by phosphorylation at Ser-764 by CDG1. Functionally, phosphatase that acts as a positive regulator of brassinosteroid (BR) signaling. Dephosphorylates BES1, a transcription factor that regulates the expression of BR-response genes, thereby playing an important role in the regulation of response to BRs. Inactivates the negative regulator of BR signaling ASK7/BIN2 by dephosphorylation at 'Tyr-200'. This is Serine/threonine-protein phosphatase BSU1 (BSU1) from Arabidopsis thaliana (Mouse-ear cress).